The primary structure comprises 352 residues: UDP-N-acetylglucosamine--N-acetylmuramyl-(pentapeptide) pyrophosphoryl-undecaprenol N-acetylglucosamine transferase (352 aa).

Residues Ser-195 and Gln-287 each coordinate UDP-N-acetyl-alpha-D-glucosamine.

It belongs to the glycosyltransferase 28 family. MurG subfamily.

The protein localises to the cell membrane. It catalyses the reaction Mur2Ac(oyl-L-Ala-gamma-D-Glu-L-Lys-D-Ala-D-Ala)-di-trans,octa-cis-undecaprenyl diphosphate + UDP-N-acetyl-alpha-D-glucosamine = beta-D-GlcNAc-(1-&gt;4)-Mur2Ac(oyl-L-Ala-gamma-D-Glu-L-Lys-D-Ala-D-Ala)-di-trans,octa-cis-undecaprenyl diphosphate + UDP + H(+). It functions in the pathway cell wall biogenesis; peptidoglycan biosynthesis. Functionally, cell wall formation. Catalyzes the transfer of a GlcNAc subunit on undecaprenyl-pyrophosphoryl-MurNAc-pentapeptide (lipid intermediate I) to form undecaprenyl-pyrophosphoryl-MurNAc-(pentapeptide)GlcNAc (lipid intermediate II). The chain is UDP-N-acetylglucosamine--N-acetylmuramyl-(pentapeptide) pyrophosphoryl-undecaprenol N-acetylglucosamine transferase from Streptococcus pneumoniae (strain 70585).